A 655-amino-acid polypeptide reads, in one-letter code: Potassium voltage-gated channel subfamily A member 4 (655 aa).

The Cytoplasmic segment spans residues 1–306; that stretch reads MEVAMVSAES…LLFEYPESSS (306 aa). The segment at 24 to 153 is disordered; that stretch reads QARARERERL…SEEDHGDGCS (130 aa). Low complexity predominate over residues 36–50; the sequence is SRAAAAAAVAAATAA. Residues 81–90 show a composition bias toward basic and acidic residues; it reads GSREEEATRT. The span at 91–100 shows a compositional bias: basic residues; sequence EKKKKLHHRQ. Phosphoserine is present on Ser-123. Acidic residues predominate over residues 123–138; sequence SEEEEDEEEEEEEEEE. Residues 139–150 are compositionally biased toward basic and acidic residues; the sequence is GRFYYSEEDHGD. A helical membrane pass occupies residues 307-328; it reads PARGIAIVSVLVILISIVIFCL. At 329 to 372 the chain is on the extracellular side; the sequence is ETLPEFRDDRDLIMALSAGGHSRLLNDTSAPHLENSGHTIFNDP. Asn-354 is a glycosylation site (N-linked (GlcNAc...) asparagine). The helical transmembrane segment at 373-394 threads the bilayer; sequence FFIVETVCIVWFSFEFVVRCFA. Residues 395 to 405 lie on the Cytoplasmic side of the membrane; it reads CPSQALFFKNI. The chain crosses the membrane as a helical span at residues 406–426; that stretch reads MNIIDIVSILPYFITLGTDLA. Topologically, residues 427 to 441 are extracellular; it reads QQQGGGNGQQQQAMS. The chain crosses the membrane as a helical; Voltage-sensor span at residues 442–462; that stretch reads FAILRIIRLVRVFRIFKLSRH. Topologically, residues 463–477 are cytoplasmic; that stretch reads SKGLQILGHTLRASM. Positions 464 to 477 are S4-S5 linker; it reads KGLQILGHTLRASM. The chain crosses the membrane as a helical span at residues 478–499; that stretch reads RELGLLIFFLFIGVILFSSAVY. The Extracellular segment spans residues 500-513; sequence FAEADEPTTHFQSI. The helical intramembrane region spans 514–525; sequence PDAFWWAVVTMT. Residues 526–531 carry the Selectivity filter motif; the sequence is TVGYGD. Residues 526–533 lie within the membrane without spanning it; the sequence is TVGYGDMK. Residues 534 to 540 lie on the Extracellular side of the membrane; sequence PITVGGK. A helical membrane pass occupies residues 541 to 569; the sequence is IVGSLCAIAGVLTIALPVPVIVSNFNYFY. Residues 570–655 lie on the Cytoplasmic side of the membrane; that stretch reads HRETENEEQT…SNAKAVETDV (86 aa). Ser-601 is subject to Phosphoserine; by PKA. Basic and acidic residues predominate over residues 631–642; that stretch reads CQGKGDDSETDK. The tract at residues 631–655 is disordered; the sequence is CQGKGDDSETDKNNCSNAKAVETDV. The PDZ-binding motif lies at 653-655; sequence TDV.

It belongs to the potassium channel family. A (Shaker) (TC 1.A.1.2) subfamily. Kv1.4/KCNA4 sub-subfamily. In terms of assembly, homotetramer and heterotetramer of potassium channel proteins. Interacts with KCNAB1 and KCNAB2. Interacts with DLG1, DLG2 and DLG4 via their PDZ domains. Interacts with SIGMAR1. Part of a complex containing KCNA1, KCNAB1 and LGI1. Detected in a complex with KCNA1. Interacts with KCNA2. Interacts (via cytoplasmic N-terminal domain) with KCNRG. In terms of processing, N-glycosylated. Detected in brain (at protein level). Heart and brain.

It is found in the cell membrane. Its subcellular location is the cell projection. The protein localises to the axon. It carries out the reaction K(+)(in) = K(+)(out). Functionally, voltage-gated potassium channel that mediates transmembrane potassium transport in excitable membranes. Forms tetrameric potassium-selective channels through which potassium ions pass in accordance with their electrochemical gradient. The channel alternates between opened and closed conformations in response to the voltage difference across the membrane. Can form functional homotetrameric channels and heterotetrameric channels that contain variable proportions of KCNA1, KCNA2, KCNA4, KCNA5, and possibly other family members as well; channel properties depend on the type of alpha subunits that are part of the channel. Channel properties are modulated by cytoplasmic beta subunits that regulate the subcellular location of the alpha subunits and promote rapid inactivation. In vivo, membranes probably contain a mixture of heteromeric potassium channel complexes, making it difficult to assign currents observed in intact tissues to any particular potassium channel family member. Homotetrameric KCNA4 forms a potassium channel that opens in response to membrane depolarization, followed by rapid spontaneous channel closure. Likewise, a heterotetrameric channel formed by KCNA1 and KCNA4 shows rapid inactivation. This is Potassium voltage-gated channel subfamily A member 4 (Kcna4) from Rattus norvegicus (Rat).